The sequence spans 976 residues: 3-hydroxy-3-methylglutaryl-coenzyme A reductase (976 aa).

The Lumenal portion of the chain corresponds to 1–36 (MDHEGCQGQHPQQCCQWVSNAWSEFLDLLKNAETLD). In terms of domain architecture, SSD spans 36–217 (DIVIMLLGYI…FTFYTAILSI (182 aa)). A helical membrane pass occupies residues 37–57 (IVIMLLGYIAMHLTFVSLFLS). Residues 58–64 (MRKMGSK) lie on the Cytoplasmic side of the membrane. A helical transmembrane segment spans residues 65 to 85 (FWLGICTLFSSVFAFLFGLVV). At 86-90 (TTKLG) the chain is on the lumenal side. The helical transmembrane segment at 91–111 (VPISVILLSEGLPFLVVTIGF) threads the bilayer. Residues 112 to 169 (EKNIVLTRAVMSHAIEHRRIQAQNSKSGKRSPDGSTQNMIQYAVQAAIKEKGFEIIRD) lie on the Cytoplasmic side of the membrane. Residues 170–190 (YAIEIVILVIGAASGVQGGLQ) form a helical membrane-spanning segment. Residues 191 to 193 (QFC) lie on the Lumenal side of the membrane. Residues 194 to 214 (FLAAWTLFFDFILLFTFYTAI) form a helical membrane-spanning segment. The Cytoplasmic segment spans residues 215 to 272 (LSIKLRSTVSSVMSICVWPLRMMASRRVAENVAKGDDELNRVRGDAPLFGRKSSSIPK). The chain crosses the membrane as a helical span at residues 273–293 (FKVLMILGFIFVNIVNICSIP). Over 294–401 (FRNPSSMSTI…GGILKSLEDP (108 aa)) the chain is Lumenal. The chain crosses the membrane as a helical span at residues 402-422 (VLSKWIVIALALSVALNGYLF). Topologically, residues 423–976 (NVARWGIKDP…RYSEVKAIDE (554 aa)) are cytoplasmic. E618 (charge relay system) is an active-site residue. 624–630 (SASRGCK) contributes to the CoA binding site. Residues 685 to 687 (SRF) and 712 to 720 (DAMGMNMIS) each bind NADP(+). Catalysis depends on K752, which acts as the Charge relay system. CoA is bound at residue 781 to 783 (VLK). The active-site Charge relay system is the D828. Residue 923 to 924 (AH) coordinates CoA. The active-site Proton donor is the H924. The tract at residues 926–954 (QHNRSAAPSRSTTPGSSHDARLTGHDQCP) is disordered. 928-929 (NR) contributes to the NADP(+) binding site. A compositionally biased stretch (polar residues) spans 928–941 (NRSAAPSRSTTPGS). Over residues 943–953 (HDARLTGHDQC) the composition is skewed to basic and acidic residues.

This sequence belongs to the HMG-CoA reductase family.

The protein localises to the endoplasmic reticulum membrane. The catalysed reaction is (R)-mevalonate + 2 NADP(+) + CoA = (3S)-3-hydroxy-3-methylglutaryl-CoA + 2 NADPH + 2 H(+). Its pathway is metabolic intermediate biosynthesis; (R)-mevalonate biosynthesis; (R)-mevalonate from acetyl-CoA: step 3/3. HMG-CoA reductase; part of the first module of ergosterol biosynthesis pathway that includes the early steps of the pathway, conserved across all eukaryotes, and which results in the formation of mevalonate from acetyl-coenzyme A (acetyl-CoA). In this module, the cytosolic acetyl-CoA acetyltransferase catalyzes the formation of acetoacetyl-CoA. The hydroxymethylglutaryl-CoA synthase then condenses acetyl-CoA with acetoacetyl-CoA to form HMG-CoA. The rate-limiting step of the early module is the reduction to mevalonate by the 3-hydroxy-3-methylglutaryl-coenzyme A (HMG-CoA) reductase HMGR. The chain is 3-hydroxy-3-methylglutaryl-coenzyme A reductase from Fusarium fujikuroi (Bakanae and foot rot disease fungus).